A 138-amino-acid polypeptide reads, in one-letter code: Ribosome-binding factor A (138 aa).

Belongs to the RbfA family. Monomer. Binds 30S ribosomal subunits, but not 50S ribosomal subunits or 70S ribosomes.

Its subcellular location is the cytoplasm. Its function is as follows. One of several proteins that assist in the late maturation steps of the functional core of the 30S ribosomal subunit. Associates with free 30S ribosomal subunits (but not with 30S subunits that are part of 70S ribosomes or polysomes). Required for efficient processing of 16S rRNA. May interact with the 5'-terminal helix region of 16S rRNA. This is Ribosome-binding factor A from Bradyrhizobium sp. (strain ORS 278).